The primary structure comprises 210 residues: N-(5'-phosphoribosyl)anthranilate isomerase (210 aa).

The protein belongs to the TrpF family.

It catalyses the reaction N-(5-phospho-beta-D-ribosyl)anthranilate = 1-(2-carboxyphenylamino)-1-deoxy-D-ribulose 5-phosphate. Its pathway is amino-acid biosynthesis; L-tryptophan biosynthesis; L-tryptophan from chorismate: step 3/5. The chain is N-(5'-phosphoribosyl)anthranilate isomerase from Methanococcus aeolicus (strain ATCC BAA-1280 / DSM 17508 / OCM 812 / Nankai-3).